Reading from the N-terminus, the 189-residue chain is Cancer/testis antigen family 45 member A10 (189 aa).

It belongs to the CT45 family.

Its subcellular location is the nucleus. The protein is Cancer/testis antigen family 45 member A10 of Homo sapiens (Human).